A 289-amino-acid chain; its full sequence is Caffeoylpyruvate hydrolase (289 aa).

3 residues coordinate a divalent metal cation: glutamate 140, glutamate 142, and aspartate 171.

Belongs to the FAH family. Homodimer. It depends on Mg(2+) as a cofactor. Requires Mn(2+) as cofactor.

The catalysed reaction is (E)-caffeoylpyruvate + H2O = (E)-caffeate + pyruvate + H(+). The protein operates within secondary metabolite biosynthesis. Caffeoylpyruvate hydrolase; part of the gene cluster that mediates the fungal bioluminescence cycle. Involved in the recycling of oxyluciferin, a pyruvic acid adduct of caffeic acid, to caffeic acid. The fungal bioluminescence cycle begins with the hispidin synthetase that catalyzes the formation of hispidin which is further hydroxylated by the hispidin-3-hydroxylase, yielding the fungal luciferin 3-hydroxyhispidin. The luciferase then produces an endoperoxide as a high-energy intermediate with decomposition that yields oxyluciferin (also known as caffeoylpyruvate) and light emission. Oxyluciferin can be recycled to caffeic acid by caffeoylpyruvate hydrolase. The polypeptide is Caffeoylpyruvate hydrolase (Neonothopanus nambi (Agaricus nambi)).